Consider the following 63-residue polypeptide: Mu-like prophage FluMu protein gp38 (63 aa).

This sequence to phage Mu protein gp38.

This is Mu-like prophage FluMu protein gp38 from Haemophilus influenzae (strain ATCC 51907 / DSM 11121 / KW20 / Rd).